A 467-amino-acid polypeptide reads, in one-letter code: Asparagine--tRNA ligase (467 aa).

This sequence belongs to the class-II aminoacyl-tRNA synthetase family. Homodimer.

Its subcellular location is the cytoplasm. The catalysed reaction is tRNA(Asn) + L-asparagine + ATP = L-asparaginyl-tRNA(Asn) + AMP + diphosphate + H(+). The polypeptide is Asparagine--tRNA ligase (Bacteroides fragilis (strain YCH46)).